A 172-amino-acid polypeptide reads, in one-letter code: Keratin, high-sulfur matrix protein, B2A (172 aa).

An N-acetylalanine modification is found at Ala-2. 5 consecutive repeats follow at residues Pro-27–Gln-36, Pro-37–Gln-46, Pro-47–Gln-56, Pro-57–Gln-66, and Pro-67–Glu-76.

The keratin products of mammalian epidermal derivatives such as wool and hair consist of microfibrils embedded in a rigid matrix of other proteins. The matrix proteins include the high-sulfur and high-tyrosine keratins, having molecular weights of 6-20 kDa, whereas the microfibrils contain the larger, low-sulfur keratins (40-56 kDa). The chain is Keratin, high-sulfur matrix protein, B2A from Ovis aries (Sheep).